A 76-amino-acid polypeptide reads, in one-letter code: Demidefensin-3 (76 aa).

The signal sequence occupies residues 1 to 22 (MRTLALHTAMLLLVALHAQAEA). Residues 23 to 64 (RQARADEAAAQQQPGADDQGMAHSFTWPENAALPLSESERGL) constitute a propeptide that is removed on maturation. A disordered region spans residues 25 to 45 (ARADEAAAQQQPGADDQGMAH). Residues 30–44 (AAAQQQPGADDQGMA) show a composition bias toward low complexity. Cys68 and Cys73 form a disulfide bridge. The propeptide occupies 74-76 (RLL).

This sequence belongs to the alpha-defensin family. Theta subfamily. Forms a cyclic homodimer; disulfide-linked. In terms of processing, this is a cyclic peptide.

Has antimicrobial activities against bacteria and fungi. This Macaca mulatta (Rhesus macaque) protein is Demidefensin-3.